The following is a 212-amino-acid chain: Ribonuclease HII (212 aa).

The RNase H type-2 domain occupies 1–206; sequence MILVGIDEAG…LQDIAPNYYI (206 aa). A divalent metal cation contacts are provided by Asp-7, Glu-8, and Asp-104.

Belongs to the RNase HII family. Requires Mn(2+) as cofactor. Mg(2+) is required as a cofactor.

The protein localises to the cytoplasm. The catalysed reaction is Endonucleolytic cleavage to 5'-phosphomonoester.. In terms of biological role, endonuclease that specifically degrades the RNA of RNA-DNA hybrids. This Sulfolobus acidocaldarius (strain ATCC 33909 / DSM 639 / JCM 8929 / NBRC 15157 / NCIMB 11770) protein is Ribonuclease HII.